The chain runs to 123 residues: Large ribosomal subunit protein uL14 (123 aa).

It belongs to the universal ribosomal protein uL14 family. As to quaternary structure, part of the 50S ribosomal subunit. Forms a cluster with proteins L3 and L19. In the 70S ribosome, L14 and L19 interact and together make contacts with the 16S rRNA in bridges B5 and B8.

Binds to 23S rRNA. Forms part of two intersubunit bridges in the 70S ribosome. In Corynebacterium jeikeium (strain K411), this protein is Large ribosomal subunit protein uL14.